A 305-amino-acid polypeptide reads, in one-letter code: Ornithine carbamoyltransferase (305 aa).

Carbamoyl phosphate is bound by residues 53–56 (STRT), glutamine 80, arginine 104, and 131–134 (HPCQ). Residues asparagine 162, aspartate 219, and 223-224 (SM) contribute to the L-ornithine site. Carbamoyl phosphate contacts are provided by residues 259–260 (CL) and arginine 287.

The protein belongs to the aspartate/ornithine carbamoyltransferase superfamily. OTCase family.

Its subcellular location is the cytoplasm. The enzyme catalyses carbamoyl phosphate + L-ornithine = L-citrulline + phosphate + H(+). The protein operates within amino-acid biosynthesis; L-arginine biosynthesis; L-arginine from L-ornithine and carbamoyl phosphate: step 1/3. Its function is as follows. Reversibly catalyzes the transfer of the carbamoyl group from carbamoyl phosphate (CP) to the N(epsilon) atom of ornithine (ORN) to produce L-citrulline. The polypeptide is Ornithine carbamoyltransferase (Psychrobacter cryohalolentis (strain ATCC BAA-1226 / DSM 17306 / VKM B-2378 / K5)).